Reading from the N-terminus, the 279-residue chain is Protease HtpX homolog (279 aa).

2 consecutive transmembrane segments (helical) span residues 6–26 and 28–48; these read TVALMTVLTLLLVWAGGMMGG and GGALFALIMAAVMNLGSYWFS. Residue histidine 127 participates in Zn(2+) binding. The active site involves glutamate 128. Histidine 131 contributes to the Zn(2+) binding site. The next 2 helical transmembrane spans lie at 137 to 157 and 177 to 197; these read ILIGSIAATIAGAISYLAHMA and LGLLLLIIFAPLAAMLVQMAI. Position 202 (glutamate 202) interacts with Zn(2+).

Belongs to the peptidase M48B family. The cofactor is Zn(2+).

The protein localises to the cell inner membrane. The protein is Protease HtpX homolog of Syntrophotalea carbinolica (strain DSM 2380 / NBRC 103641 / GraBd1) (Pelobacter carbinolicus).